The primary structure comprises 568 residues: MKKISRKEYVSMYGPTTGDKVRLGDTDLILEVEHDCTTYGEEIKFGGGKTIRDGMGQTNSPSSHELDLVITNALIVDYTGIYKADIGIKNGKIHGIGKAGNKDLQDGVCNRLCVGPATEALAAEGLIVTAGGIDTHIHFISPQQIPTAFASGITTMIGGGTGPADGTNATTITPGRWNLKEMLRASEEYAMNLGYLGKGNVSFEPALIDQLEAGAIGFKIHEDWGSTPSAINHALNIADKYDVQVAIHTDTLNEAGCVEDTLEAIAGRTIHTFHTEGAGGGHAPDVIKMAGEFNILPASTNPTIPFTKNTEAEHMDMLMCHHLDKNIKEDVEFADSRIRPQTIAAEDKLHDMGIFSITSSDSQAMGRVGEVITRTWQTADKNKKEFGRLPEEKGDNDNFRIKRYISKYTINPAITHGISEYVGSVEVGKYADLVLWSPAFFGIKPNMIIKGGFIALSQMGDANASIPTPQPVYYREMFGHHGKAKFDTNITFVSQVAYENGIKHELGLQRVVLPVKNCRNITKKDLKFNDVTAHIEVNPETYKVKVDGNEVTSHAADKLSLAQLYNLF.

Positions 131-568 constitute a Urease domain; that stretch reads GGIDTHIHFI…LSLAQLYNLF (438 aa). Residues H136, H138, and K219 each contribute to the Ni(2+) site. K219 carries the post-translational modification N6-carboxylysine. H221 contacts substrate. The Ni(2+) site is built by H248 and H274. Catalysis depends on H321, which acts as the Proton donor. Position 361 (D361) interacts with Ni(2+).

This sequence belongs to the metallo-dependent hydrolases superfamily. Urease alpha subunit family. In terms of assembly, heterohexamer of 3 UreA (alpha) and 3 UreB (beta) subunits. The cofactor is Ni cation. In terms of processing, carboxylation allows a single lysine to coordinate two nickel ions.

The protein resides in the cytoplasm. It catalyses the reaction urea + 2 H2O + H(+) = hydrogencarbonate + 2 NH4(+). The protein operates within nitrogen metabolism; urea degradation; CO(2) and NH(3) from urea (urease route): step 1/1. The polypeptide is Urease subunit beta (Helicobacter heilmannii).